Here is a 66-residue protein sequence, read N- to C-terminus: Small vasohibin-binding protein (66 aa).

Positions 1–23 (MDPPARKEKSKVKEPAFRVEKAK) are enriched in basic and acidic residues. Positions 1 to 30 (MDPPARKEKSKVKEPAFRVEKAKQKSAQQE) are disordered. Residues 5-52 (ARKEKSKVKEPAFRVEKAKQKSAQQELKQRQRAEIYALNRVMTELEQQ) are a coiled coil.

This sequence belongs to the SVBP family. As to quaternary structure, interacts with VASH1 and VASH2. Highly expressed in bone marrow, spleen and testis.

The protein localises to the cytoplasm. It is found in the secreted. The protein resides in the cytoskeleton. Its function is as follows. Enhances the tyrosine carboxypeptidase activity of VASH1 and VASH2, thereby promoting the removal of the C-terminal tyrosine residue of alpha-tubulin. Also required to enhance the solubility and secretion of VASH1 and VASH2. Plays a role in axon and excitatory synapse formation. In Mus musculus (Mouse), this protein is Small vasohibin-binding protein.